Reading from the N-terminus, the 315-residue chain is 4-diphosphocytidyl-2-C-methyl-D-erythritol kinase (315 aa).

Lys-8 is an active-site residue. 93-103 serves as a coordination point for ATP; the sequence is PVAAGLAGGSS. Asp-135 is a catalytic residue.

This sequence belongs to the GHMP kinase family. IspE subfamily.

The catalysed reaction is 4-CDP-2-C-methyl-D-erythritol + ATP = 4-CDP-2-C-methyl-D-erythritol 2-phosphate + ADP + H(+). It participates in isoprenoid biosynthesis; isopentenyl diphosphate biosynthesis via DXP pathway; isopentenyl diphosphate from 1-deoxy-D-xylulose 5-phosphate: step 3/6. Functionally, catalyzes the phosphorylation of the position 2 hydroxy group of 4-diphosphocytidyl-2C-methyl-D-erythritol. The chain is 4-diphosphocytidyl-2-C-methyl-D-erythritol kinase from Heliobacterium modesticaldum (strain ATCC 51547 / Ice1).